The primary structure comprises 716 residues: FLYWCH-type zinc finger-containing protein 1 (716 aa).

The interval 1-35 is disordered; it reads MPLPEPSEQEGESVKAGQEPSPKPGTDVIPAAPRK. Serine 21 is modified (phosphoserine). The FLYWCH-type 1 zinc-finger motif lies at 116–174; that stretch reads FLRTPFGGRLLVLESFLYKQEKAVGDKVYWKCRQHAELGCRGRAITRGLRATVMRGHCH. Lysine 134 is covalently cross-linked (Glycyl lysine isopeptide (Lys-Gly) (interchain with G-Cter in SUMO2)). A disordered region spans residues 191 to 231; the sequence is PSLALPEGLGEPQGPEGPGGRVEEPLEGVGPWQCPEEPEPT. Positions 195 to 204 are enriched in low complexity; sequence LPEGLGEPQG. Serine 261 is modified (phosphoserine). Residues 273-331 form an FLYWCH-type 2 zinc finger; that stretch reads FLRTCYGGSFLVHESFLYKREKAVGDKVYWTCRDHALHGCRSRAITQGQRVTVMRGHCH. Serine 371 carries the phosphoserine modification. Residues 377-421 form a disordered region; that stretch reads GPGPLTLTRPRPRKRAKVEDQELPTQPEAPDEHQDMDADPGGPEF. Lysine 393 is covalently cross-linked (Glycyl lysine isopeptide (Lys-Gly) (interchain with G-Cter in SUMO2)). The FLYWCH-type 3 zinc finger occupies 421–479; the sequence is FLKTPLGGSFLVYESFLYRREKAAGEKVYWTCRDQARMGCRSRAITQGRRVTVMRGHCH. Serine 503 carries the post-translational modification Phosphoserine. The segment at 509-567 adopts an FLYWCH-type 4 zinc-finger fold; sequence FLKTPLGGSFLVYESFLYRREKAAGEKVYWTCRDQARMGCRSRAITQGRRVMVMRRHCH. Serine 591 is subject to Phosphoserine. Residues 600–658 form an FLYWCH-type 5 zinc finger; it reads FLRTSLGGRFLVHESFLYRKEKAAGEKVYWMCRDQARLGCRSRAITQGHRIMVMRSHCH. Lysine 685 is covalently cross-linked (Glycyl lysine isopeptide (Lys-Gly) (interchain with G-Cter in SUMO2)). At serine 696 the chain carries Phosphoserine.

Interacts with CTNNB1 (when unphosphorylated), perhaps preventing interaction of CTNNB1 with TCF4, and thereby regulating transcription activation; phosphorylation of CTNNB1 may inhibit the interaction.

It is found in the nucleus. Its subcellular location is the chromosome. It localises to the centromere. In terms of biological role, transcription cofactor. Negatively regulates transcription activation by catenin beta-1 CTNNB1, perhaps acting by competing with TCF4 for CTNNB1 binding. May play a role in DNA-damage response signaling. Binds specifically to DNA sequences at peri-centromeric chromatin loci. This chain is FLYWCH-type zinc finger-containing protein 1 (FLYWCH1), found in Homo sapiens (Human).